Consider the following 817-residue polypeptide: Exocyst complex component 6 (817 aa).

Coiled coils occupy residues 87 to 149 (QSFV…DQIA) and 247 to 270 (TDAERAKKIQEEARKNASNVEIEV).

This sequence belongs to the SEC15 family. As to quaternary structure, the exocyst complex is composed of sec-3/exoc1, sec-5/exoc2, sec-6/exoc3, sec-8/exoc4, sec-10/exoc5, sec-15/exoc6, exo-70/exoc7 and exo-84/exoc8.

Component of the exocyst complex involved in the docking of exocytic vesicles with fusion sites on the plasma membrane. This chain is Exocyst complex component 6 (sec-15), found in Caenorhabditis elegans.